Here is a 239-residue protein sequence, read N- to C-terminus: MNKNIIIKSIAALTILTSVTGVGTTMVEGIQQTAKAENTVKQITNTNVAPYSGVTWMGAGTGFVVGNHTIITNKHVTYHMKVGDEIKAHPNGFYNNGGGLYKVTKIVDYPGKEDIAVVQVEEKSTQPKGRKFKDFTSKFNIASEAKENEPISVIGYPNPNGNKLQMYESTGKVLSVNGNIVSSDAIIQPGSSGSPILNSKHEAIGVIYAGNKPSGESTRGFAVYFSPEIKKFIADNLDK.

Residues 1 to 36 (MNKNIIIKSIAALTILTSVTGVGTTMVEGIQQTAKA) form the signal peptide. Active-site charge relay system residues include histidine 75, aspartate 114, and serine 192.

This sequence belongs to the peptidase S1B family.

The protein resides in the secreted. The chain is Serine protease SplF (splF) from Staphylococcus aureus (strain Mu50 / ATCC 700699).